The sequence spans 305 residues: Syntaxin-112 (305 aa).

Met-1 carries the post-translational modification N-acetylmethionine. A coiled-coil region spans residues 52-119 (QEIETIKTLI…TLIETLEKRN (68 aa)). Residues 210–272 (DLKTKERHEA…SGGTNSLYYA (63 aa)) enclose the t-SNARE coiled-coil homology domain.

The protein belongs to the syntaxin family. Part of the t-SNARE complex.

In terms of biological role, vesicle trafficking protein that functions in the secretory pathway. The protein is Syntaxin-112 (SYP112) of Arabidopsis thaliana (Mouse-ear cress).